Reading from the N-terminus, the 1663-residue chain is Complement C3 (1663 aa).

An N-terminal signal peptide occupies residues 1–22; the sequence is MGPTSGPSLLLLLLTHLPLALG. 2 positions are modified to phosphoserine; by FAM20C: serine 38 and serine 70. N-linked (GlcNAc...) asparagine glycosylation is present at asparagine 85. A phosphoserine; by FAM20C mark is found at serine 297 and serine 303. Cystine bridges form between cysteine 559–cysteine 816, cysteine 627–cysteine 662, cysteine 693–cysteine 720, cysteine 694–cysteine 727, cysteine 707–cysteine 728, cysteine 873–cysteine 1513, cysteine 1101–cysteine 1158, cysteine 1358–cysteine 1489, cysteine 1389–cysteine 1458, cysteine 1506–cysteine 1511, cysteine 1518–cysteine 1590, cysteine 1537–cysteine 1661, and cysteine 1637–cysteine 1646. At serine 672 the chain carries Phosphoserine; by FAM20C. The Anaphylatoxin-like domain occupies 693-728; sequence CCEDGMRENPMRFSCQRRTRFISLGEACKKVFLDCC. A glycan (N-linked (GlcNAc...) asparagine) is linked at asparagine 939. Positions 954 to 973 are disordered; that stretch reads REGVQKEDIPPADLSDQVPD. Serine 968 is subject to Phosphoserine; by FAM20C. Positions 1010-1013 form a cross-link, isoglutamyl cysteine thioester (Cys-Gln); the sequence is CGEQ. The residue at position 1321 (serine 1321) is a Phosphoserine; by FAM20C. Residues 1518 to 1661 form the NTR domain; that stretch reads CFIQKSDDKV…FTESMVVFGC (144 aa). The residue at position 1573 (serine 1573) is a Phosphoserine; by FAM20C. N-linked (GlcNAc...) asparagine glycosylation occurs at asparagine 1617. The interaction with CFP/properdin stretch occupies residues 1634-1659; it reads EDECQDEENQKQCQDLGAFTESMVVF.

In absence of complement activation, the C3 precursor is first processed by the removal of 4 Arg residues, forming two chains, beta and alpha, linked by a disulfide bond. In terms of assembly, complement C3b is composed of complement C3b and complement C3 beta chains that are associated via disulfide bonds. Non-enzymatic component of the C5 convertase, also named C4bC2bC3b, composed of the serine protease complement C2b (C2), complement C3b, as well as complement C4b (C4). Non-enzymatic component of the C5 convertase of the alternative complement pathways composed of the serine protease complement CFB and complement C3b. Interacts with CFP; interaction takes place together with CFB in the alternative complement system and allows the complex to become active. Interacts with CR1 (via Sushi 8 and Sushi 9 domains). Interacts with CFH. As to quaternary structure, interacts with CFH. Interacts with CR2. During pregnancy, C3dg exists as a complex (probably a 2:2:2 heterohexamer) with AGT and the proform of PRG2. Interacts with CR2 (via the N-terminal Sushi domains 1 and 2). In terms of assembly, (Microbial infection) C3b interacts with herpes simplex virus 1 (HHV-1) and herpes simplex virus 2 (HHV-2) envelope glycoprotein C; this interaction inhibits the activation of the complement system. As to quaternary structure, (Microbial infection) Interacts with Staphylococcus aureus immunoglobulin-binding protein Sbi; this interaction prevents the association between C3dg and CR2. (Microbial infection) Interacts with Staphylococcus aureus protein Fib. Post-translationally, C3 precursor is first processed by the removal of 4 Arg residues, forming two chains, beta and alpha, linked by a disulfide bond. During activation of the complement systems, the alpha chain is cleaved into C3a and C3b by the C3 convertase: C3b stays linked to the beta chain, while C3a is released in the plasma. The alpha chain is cleaved by the serine protease complement C2b component of the C3 convertase to generate C3a and C3b following activation by the classical, lectin and GZMK complement systems. The alpha chain is cleaved by CFB component of the C3 convertase to generate C3a and C3b following activation by the alternative complement system. C3a is further processed by carboxypeptidases to release the C-terminal arginine residue generating the acylation stimulating protein (ASP). Levels of ASP are increased in adipocytes in the postprandial period and by insulin and dietary chylomicrons. In terms of processing, complement C3b is rapidly split in two positions by factor I (CFI) and a cofactor (CFH) to form iC3b (inactivated C3b) and C3f which is released. CFI and CFH catalyze proteolytic degradation of already-deposited complement C3b. Then iC3b is slowly cleaved (possibly by CFI) to form C3c (beta chain + alpha' chain fragment 1 + alpha' chain fragment 2), C3dg and C3f. Other proteases produce other fragments such as C3d or C3g. Post-translationally, upon activation, the internal thioester bond reacts with carbohydrate antigens on the target surface to form amide or ester bonds, leading to covalent association with the surface of pathogens. Complement C3b interacts with complement C4b via a thioester linkage. In terms of processing, phosphorylated by FAM20C in the extracellular medium. Post-translationally, (Microbial infection) C3 is cleaved by Staphylococcus aureus aureolysin; this cleavage renders C3a and C3b inactive. C3b is rapidly degraded by host factors CFH and CFI preventing its deposition on the bacterial surface while C3a is further inactivated by aureolysin. (Microbial infection) Complement C3 beta chain is cleaved and inactivated by S.pyogenes SpeB. In terms of processing, (Microbial infection) Cleaved by N.meningitidis NalP between Leu-744 and Gly-745, generating a slightly shorter C3 alpha form and a slightly longer C3 beta form. The C3b-like fragment is degraded in the presence of the complement regulators CFH and CFI, preventing its deposition on the bacterial surface. In terms of tissue distribution, plasma. Produced in adipocytes and released into the plasma during both the fasting and postprandial periods.

It is found in the secreted. The protein resides in the cell surface. With respect to regulation, complement activation is inhibited by VSIG4. Functionally, precursor of non-enzymatic components of the classical, alternative, lectin and GZMK complement pathways, which consist in a cascade of proteins that leads to phagocytosis and breakdown of pathogens and signaling that strengthens the adaptive immune system. Its function is as follows. Non-enzymatic component of C5 convertase. Generated following cleavage by C3 convertase, it covalently attaches to the surface of pathogens, where it acts as an opsonin that marks the surface of antigens for removal. Complement C3b binds covalently via its reactive thioester, to cell surface carbohydrates or immune aggregates. Together with complement C4b, it then recruits the serine protease complement C2b to form the C5 convertase, which cleaves and activate C5, the next component of the complement pathways. In the alternative complement pathway, recruits the serine protease CFB to form the C5 convertase that cleaves and activates C5. Mediator of local inflammatory process released following cleavage by C3 convertase. Acts by binding to its receptor, C3AR1, activating G protein-coupled receptor signaling, promoting the phosphorylation, ARRB2-mediated internalization and endocytosis of C3AR1. C3a anaphylatoxin stimulates the activation of immune cells such as mast cells and basophilic leukocytes to release inflammation agents, such as cytokines, chemokines and histamine, which promote inflammation development. Also acts as potent chemoattractant for the migration of macrophages and neutrophils to the inflamed tissues, resulting in neutralization of the inflammatory triggers by multiple ways, such as phagocytosis and generation of reactive oxidants. In terms of biological role, adipogenic hormone that stimulates triglyceride synthesis and glucose transport in adipocytes, regulating fat storage and playing a role in postprandial triglyceride clearance. Appears to stimulate triglyceride synthesis via activation of the PLC, MAPK and AKT signaling pathways. Acts by binding to its receptor, C5AR2, activating G protein-coupled receptor signaling, promoting the phosphorylation, ARRB2-mediated internalization and endocytosis of C5AR2. Functionally, acts as a chemoattractant for neutrophils in chronic inflammation. This is Complement C3 from Homo sapiens (Human).